Reading from the N-terminus, the 215-residue chain is Large ribosomal subunit protein bL25 (215 aa).

A disordered region spans residues 190–215 (VLTDAEEETDETPEEPEAIRQKGDEE). A compositionally biased stretch (acidic residues) spans 193–205 (DAEEETDETPEEP). Over residues 206–215 (EAIRQKGDEE) the composition is skewed to basic and acidic residues.

The protein belongs to the bacterial ribosomal protein bL25 family. CTC subfamily. In terms of assembly, part of the 50S ribosomal subunit; part of the 5S rRNA/L5/L18/L25 subcomplex. Contacts the 5S rRNA. Binds to the 5S rRNA independently of L5 and L18.

This is one of the proteins that binds to the 5S RNA in the ribosome where it forms part of the central protuberance. The protein is Large ribosomal subunit protein bL25 of Maricaulis maris (strain MCS10) (Caulobacter maris).